The chain runs to 763 residues: Ethylene receptor 2 (763 aa).

3 consecutive transmembrane segments (helical) span residues 58–78, 86–106, and 115–135; these read FLIA…ATCS, IVLQ…ITMF, and VVLA…ATAI. Cu cation contacts are provided by C97 and H101. The region spanning 190–339 is the GAF domain; that stretch reads DRHTILYTTM…VVADQVAVAL (150 aa). In terms of domain architecture, Histidine kinase spans 382-615; that stretch reads AMYDGMRRPM…TIMLALQFQL (234 aa). Residues 641–760 enclose the Response regulatory domain; it reads QVILVDSDDT…ALGDELYRVL (120 aa). D692 is subject to 4-aspartylphosphate.

This sequence belongs to the ethylene receptor family. Cu cation is required as a cofactor. As to expression, expressed in anthers and hulls.

The protein localises to the endoplasmic reticulum membrane. The enzyme catalyses ATP + protein L-histidine = ADP + protein N-phospho-L-histidine.. In terms of biological role, ethylene receptor related to bacterial two-component regulators. Acts as a negative regulator of ethylene signaling. May delay the transition from the vegetative stage to the floral stage by up-regulating GI (GIGANTEA) and RCN1 and cause starch accumulation in stems by down-regulating the alpha-amylase AMY3D. The protein is Ethylene receptor 2 of Oryza sativa subsp. indica (Rice).